Here is a 323-residue protein sequence, read N- to C-terminus: Olfactory receptor 51S1 (323 aa).

At 1–33 (MSTLPTQIAPNSSTSMAPTFLLVGMPGLSGAPS) the chain is on the extracellular side. The N-linked (GlcNAc...) asparagine glycan is linked to N11. A helical membrane pass occupies residues 34-54 (WWTLPLIAVYLLSALGNGTIL). Residues 55-62 (WIIALQPA) are Cytoplasmic-facing. A helical transmembrane segment spans residues 63 to 83 (LHRPMHFFLFLLSVSDIGLVT). Residues 84–107 (ALMPTLLGIALAGAHTVPASACLL) are Extracellular-facing. C105 and C197 are disulfide-bonded. Residues 108–128 (QMVFIHVFSVMESSVLLAMSI) traverse the membrane as a helical segment. Topologically, residues 129 to 147 (DRALAICRPLHYPALLTNG) are cytoplasmic. Residues 148-168 (VISKISLAISFRCLGLHLPLP) traverse the membrane as a helical segment. At 169–203 (FLLAYMPYCLPQVLTHSYCLHPDVARLACPEAWGA) the chain is on the extracellular side. A helical membrane pass occupies residues 204 to 224 (AYSLFVVLSAMGLDPLLIFFS). At 225–244 (YGLIGKVLQGVESREDRWKA) the chain is on the cytoplasmic side. The helical transmembrane segment at 245–265 (GQTCAAHLSAVLLFYIPMILL) threads the bilayer. The Extracellular segment spans residues 266–280 (ALINHPELPITQHTH). The chain crosses the membrane as a helical span at residues 281–301 (TLLSYVHFLLPPLINPILYSV). Residues 302 to 323 (KMKEIRKRILNRLQPRKVGGAQ) are Cytoplasmic-facing.

It belongs to the G-protein coupled receptor 1 family.

It localises to the cell membrane. Its function is as follows. Odorant receptor. In Homo sapiens (Human), this protein is Olfactory receptor 51S1 (OR51S1).